A 2779-amino-acid chain; its full sequence is Protein lava lamp (2779 aa).

Disordered stretches follow at residues 31 to 62 (LAGSSNDLSSLQNVSASTTRGTKGKGRLDSLK), 79 to 98 (ALRKSQDERHKSSMSDSMES), and 110 to 135 (KTRSGDSSTPLVSPTKDSDPGDVSLL). The span at 33–51 (GSSNDLSSLQNVSASTTRG) shows a compositional bias: polar residues. 2 positions are modified to phosphoserine: S34 and S35. The stretch at 52–85 (TKGKGRLDSLKENLYKQQERLTALKERALRKSQD) forms a coiled coil. Residues 79-91 (ALRKSQDERHKSS) are compositionally biased toward basic and acidic residues. Residues S95, S98, S122, and S133 each carry the phosphoserine modification. The stretch at 141-175 (EKLLMLTQRTEQNRALLEQRKRDLAKSLLSVKSNI) forms a coiled coil. Phosphoserine occurs at positions 186, 352, and 354. 2 coiled-coil regions span residues 220-607 (ESRV…AESI) and 659-716 (GETL…KDLI). A compositionally biased stretch (basic and acidic residues) spans 337-352 (ERQRNLELEQEQEKAS). Disordered stretches follow at residues 337-366 (ERQRNLELEQEQEKASRSPQSEAAHTDAQV), 622-662 (RPAS…GETL), 711-730 (REKDLISSTSTSSNLSQELS), and 1716-1753 (QAQLARQQHQQQQQQHHHPAVQSQQHPPPASLFFGGDA). Low complexity-rich tracts occupy residues 717 to 730 (SSTSTSSNLSQELS) and 1716 to 1740 (QAQLARQQHQQQQQQHHHPAVQSQQ). Coiled coils occupy residues 751–1733 (LFEK…QHHH), 1785–1863 (TIED…KLIQ), and 1941–2433 (NEAP…QSQN). Disordered regions lie at residues 2348 to 2367 (EDKEDQQVSAAPPKDDGETV), 2484 to 2507 (EEVTQQQQRELPQSQQSTQGEATS), 2552 to 2578 (NRGGASGGNPASTTVSAGGPPSLTANE), and 2633 to 2665 (TERSRVSDEPSATASSSAASSSSPSKISSAGSN). The segment covering 2488 to 2502 (QQQQRELPQSQQSTQ) has biased composition (low complexity). A coiled-coil region spans residues 2504-2544 (EATSDIMQKMQKALETQEMEIVTLKEQLAIRSAEYARLAAQ). A coiled-coil region spans residues 2600-2641 (DMRVEEMIVELVQLLEERDHLQLKLSDTLRQLETERSRVSDE). The segment covering 2643–2665 (SATASSSAASSSSPSKISSAGSN) has biased composition (low complexity).

Interacts with CLIP-190 and spectrin separately.

The protein localises to the golgi apparatus. Its subcellular location is the cytoplasmic vesicle. The protein resides in the autophagosome. Its function is as follows. Lva and spectrin may form a Golgi-based scaffold that mediates interaction of Golgi bodies with microtubules and facilitates Golgi-derived membrane secretion required for the formation of furrows during cellularization. Under starvation conditions recruited by ema to developing autophagsosomes where it may function in autophagosome growth. This is Protein lava lamp (lva) from Drosophila melanogaster (Fruit fly).